The following is a 182-amino-acid chain: Large ribosomal subunit protein uL5c (182 aa).

The protein belongs to the universal ribosomal protein uL5 family. Part of the 50S ribosomal subunit; contacts the 5S rRNA.

It localises to the plastid. The protein resides in the chloroplast. In terms of biological role, binds 5S rRNA, forms part of the central protuberance of the 50S subunit. This Emiliania huxleyi (Coccolithophore) protein is Large ribosomal subunit protein uL5c (rpl5).